The chain runs to 71 residues: UPF0346 protein BCQ_2236 (71 aa).

This sequence belongs to the UPF0346 family.

This is UPF0346 protein BCQ_2236 from Bacillus cereus (strain Q1).